The sequence spans 387 residues: MKQAVIVDCIRTPMGRSKAGVFRNVRAETLSAELMKALLIRNPQLDPSLIEDVIWGCVQQTLEQGFNIARNASLLAGIPKTAGAVTVNRLCGSSMDAIHQAARAIMTGMGDTFIIGGVEHMGHVPMNHGVDFHPGLANRVAKASGMMGLTAEMLGKMHGISREQQDAFAVRSHQRAHAATVEGRFAKEIWAMEGHDANGALIKVMHDEVIRPETTMESLAGLRPVFDPANGTVTAGTSSALSDGASAMLVMEESKARALGLPIRARIRSMAVAGCDAAIMGYGPVPATQKALARAGLTVADLDVIELNEAFAAQSLPCVKDLGLQDVVEEKINLNGGAIALGHPLGCSGARISTTLINLMEEKDATIGLATMCIGLGQGIATVFERV.

The Acyl-thioester intermediate role is filled by C91. Active-site proton acceptor residues include H343 and C373.

The protein belongs to the thiolase-like superfamily. Thiolase family. Heterotetramer of two alpha chains (FadB) and two beta chains (FadA).

It localises to the cytoplasm. The enzyme catalyses an acyl-CoA + acetyl-CoA = a 3-oxoacyl-CoA + CoA. It participates in lipid metabolism; fatty acid beta-oxidation. Functionally, catalyzes the final step of fatty acid oxidation in which acetyl-CoA is released and the CoA ester of a fatty acid two carbons shorter is formed. In Shewanella denitrificans (strain OS217 / ATCC BAA-1090 / DSM 15013), this protein is 3-ketoacyl-CoA thiolase.